A 209-amino-acid chain; its full sequence is Uracil phosphoribosyltransferase (209 aa).

Residues arginine 79, arginine 104, and 131–139 (DPMLATGGS) contribute to the 5-phospho-alpha-D-ribose 1-diphosphate site. Residues isoleucine 194 and 199–201 (GDA) contribute to the uracil site. Aspartate 200 is a binding site for 5-phospho-alpha-D-ribose 1-diphosphate.

This sequence belongs to the UPRTase family. The cofactor is Mg(2+).

The catalysed reaction is UMP + diphosphate = 5-phospho-alpha-D-ribose 1-diphosphate + uracil. Its pathway is pyrimidine metabolism; UMP biosynthesis via salvage pathway; UMP from uracil: step 1/1. Allosterically activated by GTP. In terms of biological role, catalyzes the conversion of uracil and 5-phospho-alpha-D-ribose 1-diphosphate (PRPP) to UMP and diphosphate. The sequence is that of Uracil phosphoribosyltransferase from Clostridium perfringens (strain SM101 / Type A).